A 306-amino-acid chain; its full sequence is Homeobox protein Hox-C13a (306 aa).

The homeobox DNA-binding region spans 236–295; it reads GRKKRVPYTKIQLKELEKEYAASKFITKDKRRRISATTNLSERQVTIWFQNRRVKEKKFV.

This sequence belongs to the Abd-B homeobox family.

It localises to the nucleus. In terms of biological role, sequence-specific transcription factor which is part of a developmental regulatory system that provides cells with specific positional identities on the anterior-posterior axis. This Danio rerio (Zebrafish) protein is Homeobox protein Hox-C13a (hoxc13a).